The following is a 201-amino-acid chain: IMP cyclohydrolase (201 aa).

Belongs to the archaeal IMP cyclohydrolase family.

It carries out the reaction IMP + H2O = 5-formamido-1-(5-phospho-D-ribosyl)imidazole-4-carboxamide. It participates in purine metabolism; IMP biosynthesis via de novo pathway; IMP from 5-formamido-1-(5-phospho-D-ribosyl)imidazole-4-carboxamide: step 1/1. Catalyzes the cyclization of 5-formylamidoimidazole-4-carboxamide ribonucleotide to IMP. The sequence is that of IMP cyclohydrolase from Methanococcus maripaludis (strain C6 / ATCC BAA-1332).